Here is a 316-residue protein sequence, read N- to C-terminus: Remorin 4.1 (316 aa).

3 disordered regions span residues 1–108, 125–202, and 267–287; these read MLSE…PSEL, NANA…SVGQ, and AQNE…SAEA. Residues 40 to 53 are compositionally biased toward acidic residues; sequence EREEEVVVEEELEE. Over residues 92-104 the composition is skewed to polar residues; it reads RHTSIRSVGSDTA. Positions 125–135 are enriched in low complexity; the sequence is NANAAAAAAAN. 2 stretches are compositionally biased toward basic and acidic residues: residues 143 to 153 and 277 to 287; these read GVDDALGRIGE and KAEEKRASAEA. A coiled-coil region spans residues 242–288; that stretch reads VEKANAWLKKYERKLEEKRAKAMEKAQNEVAKARRKAEEKRASAEAK.

Belongs to the remorin family. Interacts with BAK1. Post-translationally, phosphorylated by BRI1. Phosphorylation reduces the binding affinity to BAK1. As to expression, expressed in roots, leaf blades and leaf sheaths. Expressed at low levels in stems and spikelets.

The protein localises to the cell membrane. Functionally, functions in abscisic acid (ABA) signaling downstream of BZIP23. Acts as antagonistic and negative regulator of brassinosteroid (BR) signaling. Binds to BAK1 and inhibits its interaction with the BR receptor BRI1. Inhibits the formation and subsequent activation of the BRI1-BAK1 receptor complex. This chain is Remorin 4.1, found in Oryza sativa subsp. japonica (Rice).